Here is a 460-residue protein sequence, read N- to C-terminus: Ankyrin repeat and MYND domain-containing protein 2 (460 aa).

ANK repeat units follow at residues 45 to 74, 79 to 108, and 159 to 188; these read HGMTPLMHAAYKGKVDMCRLLLRHGADVNC, HGYTALMFAGLSGNKEITWMMLEAGAETDV, and KLAGPLHKIITTTNMHPVKIVLLVKENPLL. The Zn(2+) site is built by cysteine 320, cysteine 323, cysteine 332, cysteine 335, cysteine 341, cysteine 345, histidine 353, and cysteine 357. An MYND-type zinc finger spans residues 320-357; the sequence is CTTCGEKGADKRCSVCKVVMYCDQNCQKTHWFTHKKVC. Basic and acidic residues-rich tracts occupy residues 371–387 and 425–436; these read AAKEKRRQEKKQKKDEA and ELTKEPEARAPR. The disordered stretch occupies residues 371-460; that stretch reads AAKEKRRQEK…ALQKIQDSEE (90 aa).

Its subcellular location is the cell projection. The protein resides in the cilium. Functionally, may be involved in the trafficking of signaling proteins to the cilia. The protein is Ankyrin repeat and MYND domain-containing protein 2 (ANKMY2) of Gallus gallus (Chicken).